Reading from the N-terminus, the 383-residue chain is Queuine tRNA-ribosyltransferase (383 aa).

Asp92 functions as the Proton acceptor in the catalytic mechanism. Residues 92–96 (DSGGF), Asp146, Gln190, and Gly217 each bind substrate. Positions 248–254 (GVGKPED) are RNA binding. The active-site Nucleophile is the Asp267. The interval 272–276 (TRNAR) is RNA binding; important for wobble base 34 recognition. Cys310, Cys312, Cys315, and His341 together coordinate Zn(2+).

Belongs to the queuine tRNA-ribosyltransferase family. In terms of assembly, homodimer. Within each dimer, one monomer is responsible for RNA recognition and catalysis, while the other monomer binds to the replacement base PreQ1. Zn(2+) serves as cofactor.

It carries out the reaction 7-aminomethyl-7-carbaguanine + guanosine(34) in tRNA = 7-aminomethyl-7-carbaguanosine(34) in tRNA + guanine. Its pathway is tRNA modification; tRNA-queuosine biosynthesis. Catalyzes the base-exchange of a guanine (G) residue with the queuine precursor 7-aminomethyl-7-deazaguanine (PreQ1) at position 34 (anticodon wobble position) in tRNAs with GU(N) anticodons (tRNA-Asp, -Asn, -His and -Tyr). Catalysis occurs through a double-displacement mechanism. The nucleophile active site attacks the C1' of nucleotide 34 to detach the guanine base from the RNA, forming a covalent enzyme-RNA intermediate. The proton acceptor active site deprotonates the incoming PreQ1, allowing a nucleophilic attack on the C1' of the ribose to form the product. After dissociation, two additional enzymatic reactions on the tRNA convert PreQ1 to queuine (Q), resulting in the hypermodified nucleoside queuosine (7-(((4,5-cis-dihydroxy-2-cyclopenten-1-yl)amino)methyl)-7-deazaguanosine). The sequence is that of Queuine tRNA-ribosyltransferase from Psychrobacter cryohalolentis (strain ATCC BAA-1226 / DSM 17306 / VKM B-2378 / K5).